The sequence spans 346 residues: NADH-ubiquinone oxidoreductase chain 2 (346 aa).

A run of 10 helical transmembrane segments spans residues 25-45, 60-80, 95-115, 124-144, 149-169, 178-195, 200-219, 247-267, 274-294, and 326-346; these read HWVL…PLIS, FLTQ…NAWA, CLLL…HFWF, LMTA…LLLM, LNPA…GWMG, ILAF…IILV, LALL…FMAL, VLLS…WLII, EMTP…FFYL, and AILA…HAIV.

Belongs to the complex I subunit 2 family.

The protein resides in the mitochondrion inner membrane. It carries out the reaction a ubiquinone + NADH + 5 H(+)(in) = a ubiquinol + NAD(+) + 4 H(+)(out). Its function is as follows. Core subunit of the mitochondrial membrane respiratory chain NADH dehydrogenase (Complex I) that is believed to belong to the minimal assembly required for catalysis. Complex I functions in the transfer of electrons from NADH to the respiratory chain. The immediate electron acceptor for the enzyme is believed to be ubiquinone. The sequence is that of NADH-ubiquinone oxidoreductase chain 2 (MT-ND2) from Anas capensis (Cape teal).